The primary structure comprises 184 residues: Ribosome-recycling factor (184 aa).

The protein belongs to the RRF family.

The protein resides in the cytoplasm. Functionally, responsible for the release of ribosomes from messenger RNA at the termination of protein biosynthesis. May increase the efficiency of translation by recycling ribosomes from one round of translation to another. The sequence is that of Ribosome-recycling factor from Staphylococcus carnosus (strain TM300).